The primary structure comprises 554 residues: Glucose-6-phosphate isomerase (554 aa).

E358 (proton donor) is an active-site residue. Catalysis depends on residues H389 and K515.

Belongs to the GPI family.

The protein localises to the cytoplasm. It catalyses the reaction alpha-D-glucose 6-phosphate = beta-D-fructose 6-phosphate. Its pathway is carbohydrate biosynthesis; gluconeogenesis. It functions in the pathway carbohydrate degradation; glycolysis; D-glyceraldehyde 3-phosphate and glycerone phosphate from D-glucose: step 2/4. Functionally, catalyzes the reversible isomerization of glucose-6-phosphate to fructose-6-phosphate. This is Glucose-6-phosphate isomerase from Mycobacterium leprae (strain Br4923).